The primary structure comprises 79 residues: UPF0349 protein BCE33L4669 (79 aa).

It belongs to the UPF0349 family.

This chain is UPF0349 protein BCE33L4669, found in Bacillus cereus (strain ZK / E33L).